The following is a 367-amino-acid chain: Cyclin-D3-2 (367 aa).

Low complexity predominate over residues 324-335 (STTASVSSSSSS). Residues 324-347 (STTASVSSSSSSPEPLLKRRRVQE) form a disordered region.

The protein belongs to the cyclin family. Cyclin D subfamily. As to quaternary structure, interacts with CDKA-1. As to expression, expressed in developing vegetative and floral primordia.

Functionally, promotes divisions in the guard cells (GCs) after the guard mother cells (GMC) symmetric division when in the presence of CDKA-1. The protein is Cyclin-D3-2 (CYCD3-2) of Arabidopsis thaliana (Mouse-ear cress).